The primary structure comprises 709 residues: Phosphate acetyltransferase (709 aa).

A phosphate acetyltransferase region spans residues 389-709; sequence EFCYRLKILS…TIALTSIQSL (321 aa).

In the N-terminal section; belongs to the CobB/CobQ family. The protein in the C-terminal section; belongs to the phosphate acetyltransferase and butyryltransferase family. In terms of assembly, homohexamer.

The protein resides in the cytoplasm. The catalysed reaction is acetyl-CoA + phosphate = acetyl phosphate + CoA. It functions in the pathway metabolic intermediate biosynthesis; acetyl-CoA biosynthesis; acetyl-CoA from acetate: step 2/2. Functionally, involved in acetate metabolism. The polypeptide is Phosphate acetyltransferase (pta) (Buchnera aphidicola subsp. Schizaphis graminum (strain Sg)).